The chain runs to 500 residues: Probable cytosol aminopeptidase (500 aa).

Mn(2+)-binding residues include K264 and D269. K276 is a catalytic residue. D287, D346, and E348 together coordinate Mn(2+). The active site involves R350.

This sequence belongs to the peptidase M17 family. Mn(2+) serves as cofactor.

It is found in the cytoplasm. The enzyme catalyses Release of an N-terminal amino acid, Xaa-|-Yaa-, in which Xaa is preferably Leu, but may be other amino acids including Pro although not Arg or Lys, and Yaa may be Pro. Amino acid amides and methyl esters are also readily hydrolyzed, but rates on arylamides are exceedingly low.. The catalysed reaction is Release of an N-terminal amino acid, preferentially leucine, but not glutamic or aspartic acids.. Its function is as follows. Presumably involved in the processing and regular turnover of intracellular proteins. Catalyzes the removal of unsubstituted N-terminal amino acids from various peptides. The protein is Probable cytosol aminopeptidase of Nitrobacter winogradskyi (strain ATCC 25391 / DSM 10237 / CIP 104748 / NCIMB 11846 / Nb-255).